The chain runs to 325 residues: ATP synthase gamma chain (325 aa).

The protein belongs to the ATPase gamma chain family. F-type ATPases have 2 components, CF(1) - the catalytic core - and CF(0) - the membrane proton channel. CF(1) has five subunits: alpha(3), beta(3), gamma(1), delta(1), epsilon(1). CF(0) has three main subunits: a, b and c.

Its subcellular location is the cell membrane. Produces ATP from ADP in the presence of a proton gradient across the membrane. The gamma chain is believed to be important in regulating ATPase activity and the flow of protons through the CF(0) complex. The sequence is that of ATP synthase gamma chain from Corynebacterium glutamicum (strain R).